The sequence spans 60 residues: Large ribosomal subunit protein bL32 (60 aa).

Basic residues predominate over residues 1–16; sequence MAVPRRKTSPSRRGMR. Residues 1-60 form a disordered region; the sequence is MAVPRRKTSPSRRGMRRSADAIKRPTYVEDKDSGELRRPHHLDLKTGMYKGRQVLKKKDS. Residues 17–44 are compositionally biased toward basic and acidic residues; sequence RSADAIKRPTYVEDKDSGELRRPHHLDL.

This is Large ribosomal subunit protein bL32 from Rhodopseudomonas palustris (strain ATCC BAA-98 / CGA009).